The primary structure comprises 416 residues: DNA-guanine transglycosylase (416 aa).

The Proton acceptor role is filled by Asp95. Catalysis depends on Asp256, which acts as the Nucleophile. The Zn(2+) site is built by Cys368, Cys370, Cys373, and His395.

It belongs to the DNA-guanine transglycosylase family. Zn(2+) is required as a cofactor.

Its function is as follows. Part of the dpd cluster involved in the insertion of 7-deazaguanine derivatives in DNA. DpdA may insert 7-cyano-7-deazaguanine (preQ0) into DNA with the help of DpdB. DpdA and dpdB are necessary and sufficient to synthesize 2'-deoxy-7-cyano-7-deazaguanosine (dPreQ0). The polypeptide is DNA-guanine transglycosylase (Salmonella montevideo).